The following is a 504-amino-acid chain: Glutamate--tRNA ligase (504 aa).

Residues 12–22 (PSPTGALHIGG) carry the 'HIGH' region motif. The 'KMSKS' region motif lies at 260–264 (KLSKR). K263 is an ATP binding site.

It belongs to the class-I aminoacyl-tRNA synthetase family. Glutamate--tRNA ligase type 1 subfamily. In terms of assembly, monomer.

It is found in the cytoplasm. It catalyses the reaction tRNA(Glu) + L-glutamate + ATP = L-glutamyl-tRNA(Glu) + AMP + diphosphate. Its function is as follows. Catalyzes the attachment of glutamate to tRNA(Glu) in a two-step reaction: glutamate is first activated by ATP to form Glu-AMP and then transferred to the acceptor end of tRNA(Glu). The chain is Glutamate--tRNA ligase from Bacteroides thetaiotaomicron (strain ATCC 29148 / DSM 2079 / JCM 5827 / CCUG 10774 / NCTC 10582 / VPI-5482 / E50).